A 705-amino-acid chain; its full sequence is MGDESNTLRVLVATDCHLGYMEKDEIRRFDSFEAFEEICSLAEQNKVDFVLLGGDLFHENKPSRSTLVKTIEILRRYCLNDQPVKFQVVSDQTINFPNRFGQVNYEDPNFNVGLPVFTIHGNHDDPAGVDNLSAIDILSACNLVNYFGKMDLGGSGVGEIAVYPVLVKKGTTFVALYGLGNIRDERLNRMFQTPHAVQWMRPETQDGMSVSDWFNILVLHQNRIKTNPKSAINEHFLPRFLDFIVWGHEHECLIDPQEVPGMGFHITQPGSSVATSLIDGEAKPKHVLLLEIKGNQYRPTKIPLRSVRPFHYAEVVLKDEVDVDPNDQASVLEHLDKIVRNLIKKSSQPTASRPETKLPLIRIKVDYSGFSTINPQRFGQKYVGKVANPQDILIFSKSAKKRQTTGVGNIDDSEKLRPEELNQQTIEALVAENNLKMEILPVDDLDIALHDFVSKDDKMAFYACLQRNLEETRTKLNSEADKFKIEEEDIIVKVGECMQERVKERSLRSKEDSRFTSSSQNLDTGGRSVTAQSNLNSFSDDEDTREMLLGARTTNAGRKASGFTRPSKDATDVAKTGTSRRGRGRGTASMKQTTLNFSQSRSSAAIRSEEVQSSSDEENETNEANEVVESSEPEESPQQTGRKRAAPRGGRGRGRGATAKRGRKADISSIQSMLMSKDDDDDDEDDRPKKPPPRVTRNYGAVRRR.

Mn(2+) contacts are provided by Asp-15, His-17, Asp-55, and Asn-122. The active-site Proton donor is the His-123. 3 residues coordinate Mn(2+): His-220, His-248, and His-250. Basic and acidic residues predominate over residues 505 to 514 (RSLRSKEDSR). A disordered region spans residues 505–705 (RSLRSKEDSR…TRNYGAVRRR (201 aa)). Composition is skewed to polar residues over residues 515–538 (FTSS…LNSF) and 589–605 (SMKQ…SSAA). Over residues 641 to 663 (GRKRAAPRGGRGRGRGATAKRGR) the composition is skewed to basic residues.

Belongs to the MRE11/RAD32 family. In terms of assembly, component of the MRN complex composed of two heterodimers RAD50/MRE11 associated with a single NBS1. Mn(2+) serves as cofactor.

The protein localises to the nucleus. The protein resides in the chromosome. Its function is as follows. Core component of the MRN complex, which plays a central role in double-strand break (DSB) repair, DNA recombination, maintenance of telomere integrity and meiosis. The MRN complex is involved in the repair of DNA double-strand breaks (DSBs) via homologous recombination (HR), an error-free mechanism which primarily occurs during S and G2 phases. The complex (1) mediates the end resection of damaged DNA, which generates proper single-stranded DNA, a key initial steps in HR, and is (2) required for the recruitment of other repair factors and efficient activation of ATM and ATR upon DNA damage. Within the MRN complex, MRE11 possesses both single-strand endonuclease activity and double-strand-specific 3'-5' exonuclease activity. MRE11 first endonucleolytically cleaves the 5' strand at DNA DSB ends to prevent non-homologous end joining (NHEJ) and licence HR. It then generates a single-stranded DNA gap via 3' to 5' exonucleolytic degradation, which is required for single-strand invasion and recombination. This chain is Double-strand break repair protein MRE11, found in Oryza sativa subsp. indica (Rice).